Reading from the N-terminus, the 389-residue chain is Rhizopuspepsin-1 (389 aa).

Residues 1–21 form the signal peptide; sequence MKFTLISSCVALAAMTLAVEA. The propeptide at 22–66 is activation peptide; that stretch reads APNGKKINIPLAKNNSYKPSAKNALNKALAKYNRRKVGSGGITTE. A Peptidase A1 domain is found at 82-385; that stretch reads YYGEVTVGTP…NQEVPEVQIA (304 aa). Residue D100 is part of the active site. A disulfide bridge connects residues C113 and C116. D283 is an active-site residue. A disulfide bond links C317 and C350.

Belongs to the peptidase A1 family.

It catalyses the reaction Hydrolysis of proteins with broad specificity similar to that of pepsin A, preferring hydrophobic residues at P1 and P1'. Clots milk and activates trypsinogen. Does not cleave 4-Gln-|-His-5, but does cleave 10-His-|-Leu-11 and 12-Val-|-Glu-13 in B chain of insulin.. This is Rhizopuspepsin-1 (RNAP) from Rhizopus niveus.